A 169-amino-acid polypeptide reads, in one-letter code: Regulator of sigma D (169 aa).

This sequence belongs to the Rsd/AlgQ family. As to quaternary structure, interacts with RpoD.

It localises to the cytoplasm. In terms of biological role, binds RpoD and negatively regulates RpoD-mediated transcription activation by preventing the interaction between the primary sigma factor RpoD with the catalytic core of the RNA polymerase and with promoter DNA. May be involved in replacement of the RNA polymerase sigma subunit from RpoD to RpoS during the transition from exponential growth to the stationary phase. This is Regulator of sigma D from Yersinia pseudotuberculosis serotype O:1b (strain IP 31758).